Consider the following 351-residue polypeptide: UDP-N-acetylglucosamine--N-acetylmuramyl-(pentapeptide) pyrophosphoryl-undecaprenol N-acetylglucosamine transferase (351 aa).

UDP-N-acetyl-alpha-D-glucosamine-binding positions include 12–14 (TGG), Asn124, Arg160, Ser188, Ile239, 258–263 (ALTVCE), and Gln283.

This sequence belongs to the glycosyltransferase 28 family. MurG subfamily.

The protein localises to the cell inner membrane. It carries out the reaction di-trans,octa-cis-undecaprenyl diphospho-N-acetyl-alpha-D-muramoyl-L-alanyl-D-glutamyl-meso-2,6-diaminopimeloyl-D-alanyl-D-alanine + UDP-N-acetyl-alpha-D-glucosamine = di-trans,octa-cis-undecaprenyl diphospho-[N-acetyl-alpha-D-glucosaminyl-(1-&gt;4)]-N-acetyl-alpha-D-muramoyl-L-alanyl-D-glutamyl-meso-2,6-diaminopimeloyl-D-alanyl-D-alanine + UDP + H(+). The protein operates within cell wall biogenesis; peptidoglycan biosynthesis. Cell wall formation. Catalyzes the transfer of a GlcNAc subunit on undecaprenyl-pyrophosphoryl-MurNAc-pentapeptide (lipid intermediate I) to form undecaprenyl-pyrophosphoryl-MurNAc-(pentapeptide)GlcNAc (lipid intermediate II). The protein is UDP-N-acetylglucosamine--N-acetylmuramyl-(pentapeptide) pyrophosphoryl-undecaprenol N-acetylglucosamine transferase of Actinobacillus pleuropneumoniae serotype 7 (strain AP76).